Reading from the N-terminus, the 540-residue chain is Glucose-6-phosphate isomerase (540 aa).

The active-site Proton donor is the Glu-350. Residues His-381 and Lys-503 contribute to the active site.

Belongs to the GPI family.

It is found in the cytoplasm. The catalysed reaction is alpha-D-glucose 6-phosphate = beta-D-fructose 6-phosphate. Its pathway is carbohydrate biosynthesis; gluconeogenesis. It participates in carbohydrate degradation; glycolysis; D-glyceraldehyde 3-phosphate and glycerone phosphate from D-glucose: step 2/4. In terms of biological role, catalyzes the reversible isomerization of glucose-6-phosphate to fructose-6-phosphate. The sequence is that of Glucose-6-phosphate isomerase from Burkholderia lata (strain ATCC 17760 / DSM 23089 / LMG 22485 / NCIMB 9086 / R18194 / 383).